The primary structure comprises 236 residues: Hydantoin racemase (236 aa).

In terms of assembly, homohexamer, homoheptamer or homooctamer.

The catalysed reaction is a D-5-monosubstituted hydantoin = a L-5-monosubstituted hydantoin. It carries out the reaction D-5-benzylhydantoin = L-5-benzylhydantoin. Completely inhibited by HgCl(2) and iodoacetamide. Stimulated by dithiothreitol. Involved in the asymmetric conversion of racemic 5-substituted hydantoins to the corresponding L-amino acids. Catalyzes the racemization via enolization of D- and L-5-monosubstituted hydantoins. It shows preference for hydantoins with arylalkyl side chains such as 5-benzylhydantoin (BH) and, to a lesser extent, 5-(3-indolylmethylene)hydantoin (IMH). The polypeptide is Hydantoin racemase (Paenarthrobacter aurescens (Arthrobacter aurescens)).